Here is a 187-residue protein sequence, read N- to C-terminus: Signal peptidase complex catalytic subunit SEC11 (187 aa).

The Cytoplasmic segment spans residues 1–18; that stretch reads MLSSLSPYMANPRNTLSQ. Residues 19–39 form a helical; Signal-anchor for type II membrane protein membrane-spanning segment; that stretch reads VLNFGLVLSSAFMVWKALSVI. Residues 40-187 are Lumenal-facing; sequence TNSASPVVVV…MGLMVMLQRE (148 aa). Catalysis depends on charge relay system residues S53 and H92. N125 carries N-linked (GlcNAc...) asparagine glycosylation. Residue D129 is the Charge relay system of the active site. The C-terminal short (CTS) helix stretch occupies residues 173-184; that stretch reads VLLGFMGLMVML.

The protein belongs to the peptidase S26B family. In terms of assembly, component of the signal peptidase complex (SPC) composed of a catalytic subunit SEC11 and three accessory subunits SPC1, SPC2 and SPC3. The complex induces a local thinning of the ER membrane which is used to measure the length of the signal peptide (SP) h-region of protein substrates. This ensures the selectivity of the complex towards h-regions shorter than 18-20 amino acids. SPC associates with the translocon complex.

It localises to the endoplasmic reticulum membrane. It carries out the reaction Cleavage of hydrophobic, N-terminal signal or leader sequences from secreted and periplasmic proteins.. Its function is as follows. Catalytic component of the signal peptidase complex (SPC) which catalyzes the cleavage of N-terminal signal sequences from nascent proteins as they are translocated into the lumen of the endoplasmic reticulum. Specifically cleaves N-terminal signal peptides that contain a hydrophobic alpha-helix (h-region) shorter than 18-20 amino acids. In Ajellomyces capsulatus (strain NAm1 / WU24) (Darling's disease fungus), this protein is Signal peptidase complex catalytic subunit SEC11 (SEC11).